We begin with the raw amino-acid sequence, 132 residues long: Histone H2B.2 (132 aa).

Residues 1–19 (MAPKAEKKPASKAPAEKKP) show a composition bias toward basic and acidic residues. The interval 1 to 39 (MAPKAEKKPASKAPAEKKPAAKKTSSSVDPSKKRTKARK) is disordered. N6-acetyllysine; alternate occurs at positions 7 and 8. Glycyl lysine isopeptide (Lys-Gly) (interchain with G-Cter in SUMO); alternate cross-links involve residues K7 and K8. S11 is subject to Phosphoserine. At K12 the chain carries N6-acetyllysine. Position 17 is an N6-acetyllysine; alternate (K17). Residue K17 forms a Glycyl lysine isopeptide (Lys-Gly) (interchain with G-Cter in SUMO); alternate linkage. Residue K18 forms a Glycyl lysine isopeptide (Lys-Gly) (interchain with G-Cter in SUMO) linkage. Residue K125 forms a Glycyl lysine isopeptide (Lys-Gly) (interchain with G-Cter in ubiquitin) linkage.

Belongs to the histone H2B family. As to quaternary structure, the nucleosome is a histone octamer containing two molecules each of H2A, H2B, H3 and H4 assembled in one H3-H4 heterotetramer and two H2A-H2B heterodimers. The octamer wraps approximately 147 bp of DNA. In terms of processing, monoubiquitinated by the UBC2-BRE1 complex to form H2BK123ub1. H2BK123ub1 gives a specific tag for epigenetic transcriptional activation and is also prerequisite for H3K4me and H3K79me formation. H2BK123ub1 also modulates the formation of double-strand breaks during meiosis and is a prerequisite for DNA-damage checkpoint activation. Post-translationally, phosphorylated by STE20 to form H2BS10ph during progression through meiotic prophase. May be correlated with chromosome condensation. Acetylated by GCN5 to form H2BK11ac and H2BK16ac. H2BK16ac can also be formed by ESA1. Acetylation of N-terminal lysines and particularly formation of H2BK11acK16ac has a positive effect on transcription. In terms of processing, sumoylation to form H2BK6su or H2BK7su, and probably also H2BK16su or H2BK17su, occurs preferentially near the telomeres and represses gene transcription.

It is found in the nucleus. The protein resides in the chromosome. Functionally, core component of nucleosome. Nucleosomes wrap and compact DNA into chromatin, limiting DNA accessibility to the cellular machineries which require DNA as a template. Histones thereby play a central role in transcription regulation, DNA repair, DNA replication and chromosomal stability. DNA accessibility is regulated via a complex set of post-translational modifications of histones, also called histone code, and nucleosome remodeling. The protein is Histone H2B.2 (HTB1) of Kluyveromyces lactis (strain ATCC 8585 / CBS 2359 / DSM 70799 / NBRC 1267 / NRRL Y-1140 / WM37) (Yeast).